Reading from the N-terminus, the 55-residue chain is Large ribosomal subunit protein bL33 (55 aa).

The protein belongs to the bacterial ribosomal protein bL33 family.

This Maricaulis maris (strain MCS10) (Caulobacter maris) protein is Large ribosomal subunit protein bL33.